We begin with the raw amino-acid sequence, 280 residues long: MLQSRFKMPSHDELVKRMDAIPDHVMRECPICHAKFLSMRLGRDHTCPKCGYGFRILAKRRVKITFDKFTEIDQNITVPDRYTDEKYRAKIAKAKKVTGLNESVLTGIGSLNKQQVAVGIMDPFWIMGSLGSATGEKITRLFELATRKDLPVVMFTSSGGARMQEGIHSLMQMAKVSSAVAEHSAAGLLYIVVLCDPTTGGVTASFAMDGDIILAEPHALVGFAGRRVIEQTIMQTPPKDFQSAETVMKHGFIDQIVKRSDMKKTLTQLLRLHTKENAYG.

Residues valine 25–glycine 280 enclose the CoA carboxyltransferase N-terminal domain. Zn(2+) is bound by residues cysteine 29, cysteine 32, cysteine 47, and cysteine 50. The C4-type zinc finger occupies cysteine 29–cysteine 50.

Belongs to the AccD/PCCB family. As to quaternary structure, acetyl-CoA carboxylase is a heterohexamer composed of biotin carboxyl carrier protein (AccB), biotin carboxylase (AccC) and two subunits each of ACCase subunit alpha (AccA) and ACCase subunit beta (AccD). Requires Zn(2+) as cofactor.

Its subcellular location is the cytoplasm. It catalyses the reaction N(6)-carboxybiotinyl-L-lysyl-[protein] + acetyl-CoA = N(6)-biotinyl-L-lysyl-[protein] + malonyl-CoA. The protein operates within lipid metabolism; malonyl-CoA biosynthesis; malonyl-CoA from acetyl-CoA: step 1/1. Its function is as follows. Component of the acetyl coenzyme A carboxylase (ACC) complex. Biotin carboxylase (BC) catalyzes the carboxylation of biotin on its carrier protein (BCCP) and then the CO(2) group is transferred by the transcarboxylase to acetyl-CoA to form malonyl-CoA. This is Acetyl-coenzyme A carboxylase carboxyl transferase subunit beta from Lactobacillus helveticus (strain DPC 4571).